A 242-amino-acid polypeptide reads, in one-letter code: NADH-quinone oxidoreductase subunit C (242 aa).

The insert stretch occupies residues 67 to 101 (VVNSVGLGHKEQGAKPITNRRTTSDNVGESKSIDY).

This sequence belongs to the complex I 30 kDa subunit family. In terms of assembly, NDH-1 is composed of 14 different subunits. Subunits NuoB, C, D, E, F, and G constitute the peripheral sector of the complex.

It localises to the cell inner membrane. It carries out the reaction a quinone + NADH + 5 H(+)(in) = a quinol + NAD(+) + 4 H(+)(out). NDH-1 shuttles electrons from NADH, via FMN and iron-sulfur (Fe-S) centers, to quinones in the respiratory chain. The immediate electron acceptor for the enzyme in this species is believed to be ubiquinone. Couples the redox reaction to proton translocation (for every two electrons transferred, four hydrogen ions are translocated across the cytoplasmic membrane), and thus conserves the redox energy in a proton gradient. This is NADH-quinone oxidoreductase subunit C from Rickettsia conorii (strain ATCC VR-613 / Malish 7).